The following is a 183-amino-acid chain: Transmembrane protein 154 (183 aa).

The first 22 residues, 1-22 (MQAPRAALVFALVIALVPVGRG), serve as a signal peptide directing secretion. Over 23–75 (NYEELENSGDTTVESERPNKVTIPSTFAAVTIKETLNANINSTNFAPDENQLE) the chain is Extracellular. Residues 76 to 96 (FILMVLIPLILLVLLLLSVVF) traverse the membrane as a helical segment. Residues 97–183 (LATYYKRKRT…SNHNPSDSES (87 aa)) are Cytoplasmic-facing. Residues 163–183 (ECLPTLKEEKESNHNPSDSES) are disordered. A Phosphoserine modification is found at Ser179.

It is found in the membrane. The sequence is that of Transmembrane protein 154 (TMEM154) from Homo sapiens (Human).